The chain runs to 305 residues: GPI-anchored hemophore cfmA (305 aa).

The N-terminal stretch at 1 to 18 (MKASVSLLLLSAASMASA) is a signal peptide. One can recognise a CFEM domain in the interval 19–111 (AMSVSQCAQM…GSGSGSDSGS (93 aa)). 4 disulfide bridges follow: cysteine 25/cysteine 68, cysteine 29/cysteine 63, cysteine 42/cysteine 49, and cysteine 51/cysteine 84. A heme-binding site is contributed by aspartate 46. The interval 92–287 (TATGAGGSSS…STGNVAPRGA (196 aa)) is disordered. Residues 95 to 149 (GAGGSSSGSGSGSDSGSGSGSGSGSGSGSGSGSGSSSGSGSGSGSGSGSGSGSNS) show a composition bias toward gly residues. Composition is skewed to low complexity over residues 150 to 186 (GSGSASSTATGTATGTATGTATGTATGTATGSENSTT), 196 to 259 (GASS…TATG), and 267 to 287 (GSASTTAPNSSSTGNVAPRGA). 5 N-linked (GlcNAc...) asparagine glycosylation sites follow: asparagine 183, asparagine 203, asparagine 237, asparagine 243, and asparagine 275. Serine 276 is lipidated: GPI-like-anchor amidated serine. Residues 277 to 305 (SSTGNVAPRGAVVGSGAVGALALAALIIL) constitute a propeptide, removed in mature form.

Belongs to the RBT5 family. In terms of processing, the GPI-like anchor contains a phosphoceramide lipid group. Post-translationally, the GPI-anchor is attached to the protein in the endoplasmic reticulum and serves to target the protein to the cell surface. There, the glucosamine-inositol phospholipid moiety is cleaved off and the GPI-modified mannoprotein is covalently attached via its lipidless GPI glycan remnant to the 1,6-beta-glucan of the outer cell wall layer.

It is found in the secreted. The protein localises to the cell wall. The protein resides in the cell membrane. In terms of biological role, GPI-anchored cell wall protein involved in stabilizing the cell wall. Not implicated in virulence, heme uptake and biofilm formation. The sequence is that of GPI-anchored hemophore cfmA from Aspergillus fumigatus (strain ATCC MYA-4609 / CBS 101355 / FGSC A1100 / Af293) (Neosartorya fumigata).